Reading from the N-terminus, the 439-residue chain is Telomeric repeat-binding factor 1 (439 aa).

The segment at 1-36 is disordered; that stretch reads MAEDVSSAAPSPRGCADGRDADPTEEQMAETERNDE. The residue at position 2 (Ala2) is an N-acetylalanine. Phosphoserine is present on Ser11. The span at 23–36 shows a compositional bias: acidic residues; that stretch reads PTEEQMAETERNDE. A TRFH mediates dimerization region spans residues 58 to 268; the sequence is EEEEEDAGLV…AAAKVVESKR (211 aa). Residue Lys213 forms a Glycyl lysine isopeptide (Lys-Gly) (interchain with G-Cter in SUMO2) linkage. Ser219 is modified (phosphoserine; by ATM). Residues 265-378 are interaction with RLIM; sequence ESKRTRTITS…PVTPEKHRAR (114 aa). The segment at 266–311 is disordered; the sequence is SKRTRTITSQDKPSGNDVEMETEANLDTRKSVSDKQSAVTESSEGT. Polar residues predominate over residues 299 to 311; sequence DKQSAVTESSEGT. Lys325 is covalently cross-linked (Glycyl lysine isopeptide (Lys-Gly) (interchain with G-Cter in SUMO2)). The tract at residues 326 to 375 is disordered; the sequence is LQHGTQQQDLNKKERRVGTPQSTKKKKESRRATESRIPVSKSQPVTPEKH. The short motif at 337–356 is the Nuclear localization signal element; sequence KKERRVGTPQSTKKKKESRR. A Glycyl lysine isopeptide (Lys-Gly) (interchain with G-Cter in SUMO2) cross-link involves residue Lys366. In terms of domain architecture, HTH myb-type spans 375 to 432; that stretch reads HRARKRQAWLWEEDKNLRSGVRKYGEGNWSKILLHYKFNNRTSVMLKDRWRTMKKLKL. The segment at residues 403–428 is a DNA-binding region (H-T-H motif); the sequence is WSKILLHYKFNNRTSVMLKDRWRTMK.

Homodimer; can contain both isoforms. Found in a complex with POT1; TINF2 and TNKS1. Interacts with ATM, TINF2, TNKS1, TNKS2, PINX1, NEK2 and MAPRE1. Component of the shelterin complex (telosome) composed of TERF1, TERF2, TINF2, TERF2IP ACD and POT1. Interacts with RLIM (via N-terminus). Interacts with FBXO4. Interaction with TINF2 protects against interaction with FBXO4 and subsequent polyubiquitination and proteasomal degradation. Interacts with GNL3L; this interaction promotes homodimerization. Interacts with TIN2. Interacts with RTEL1. Interactions with GNL3L and TIN2 are mutually exclusive. Interacts with CCDC79/TERB1. Interacts with TRIOBP isoform 1; mediates TERF1 localization to the centrosome. Phosphorylated preferentially on Ser-219 in an ATM-dependent manner in response to ionizing DNA damage. Post-translationally, ADP-ribosylation by TNKS1 or TNKS2 diminishes its ability to bind to telomeric DNA. In terms of processing, ubiquitinated by RLIM/RNF12, leading to its degradation by the proteasome. Ubiquitinated by a SCF (SKP1-CUL1-F-box protein) ubiquitin-protein ligase complex, leading to its degradation by the proteasome. Highly expressed and ubiquitous. Isoform Pin2 predominates.

Its subcellular location is the nucleus. It is found in the cytoplasm. The protein localises to the cytoskeleton. The protein resides in the spindle. It localises to the chromosome. Its subcellular location is the telomere. In terms of biological role, binds the telomeric double-stranded 5'-TTAGGG-3' repeat and negatively regulates telomere length. Involved in the regulation of the mitotic spindle. Component of the shelterin complex (telosome) that is involved in the regulation of telomere length and protection. Shelterin associates with arrays of double-stranded 5'-TTAGGG-3' repeats added by telomerase and protects chromosome ends; without its protective activity, telomeres are no longer hidden from the DNA damage surveillance and chromosome ends are inappropriately processed by DNA repair pathways. This chain is Telomeric repeat-binding factor 1 (TERF1), found in Homo sapiens (Human).